The chain runs to 292 residues: Transcription factor HFR1 (292 aa).

The interval 114-153 is disordered; it reads KRRIQVLSSDDESEEFTREVPSVTRKGSKRRRRDEKMSNK. Residues 134 to 147 form a basic motif; degenerate region; it reads PSVTRKGSKRRRRD. A bHLH domain is found at 134–183; sequence PSVTRKGSKRRRRDEKMSNKMRKLQQLVPNCHKTDKVSVLDKTIEYMKNL. A compositionally biased stretch (basic residues) spans 139–153; the sequence is KGSKRRRRDEKMSNK. Positions 141–148 match the Nuclear localization signal motif; it reads SKRRRRDE. The helix-loop-helix motif stretch occupies residues 148–183; it reads EKMSNKMRKLQQLVPNCHKTDKVSVLDKTIEYMKNL.

As to quaternary structure, binds to FHY1 and FHL. Forms PHYA/FHY1/HFR1 complex. Homodimer and heterodimer with PIF3. Do not interact alone with either phytochrome A (phyA) or B (phyB), but REP1/PIF3 complex binds to phyA and phyB, preferentially to the Pfr forms. Forms non-functional heterodimer with PRE6, causing liberation of PIF4 from the transcriptionally inactive complex HFR1-PIF4. Repressed when bound to PRE1, PRE2 and PRE4. In terms of tissue distribution, mainly expressed in fruits and flowers and, to a lower extent, in leaves, stems, seedlings and roots.

The protein resides in the nucleus. Its function is as follows. Atypical bHLH transcription factor that regulates photomorphogenesis through modulation of phytochrome (e.g. PHYA) and cryptochrome signalings. Suppresses the transcriptional regulation activity of PIF4 by forming non-DNA-binding heterodimer. This is Transcription factor HFR1 from Arabidopsis thaliana (Mouse-ear cress).